The sequence spans 290 residues: Ribosomal RNA small subunit methyltransferase A (290 aa).

The S-adenosyl-L-methionine site is built by Asn27, Leu29, Gly54, Glu75, Asp100, and Asn125.

Belongs to the class I-like SAM-binding methyltransferase superfamily. rRNA adenine N(6)-methyltransferase family. RsmA subfamily.

Its subcellular location is the cytoplasm. It catalyses the reaction adenosine(1518)/adenosine(1519) in 16S rRNA + 4 S-adenosyl-L-methionine = N(6)-dimethyladenosine(1518)/N(6)-dimethyladenosine(1519) in 16S rRNA + 4 S-adenosyl-L-homocysteine + 4 H(+). Functionally, specifically dimethylates two adjacent adenosines (A1518 and A1519) in the loop of a conserved hairpin near the 3'-end of 16S rRNA in the 30S particle. May play a critical role in biogenesis of 30S subunits. The protein is Ribosomal RNA small subunit methyltransferase A of Streptococcus agalactiae serotype Ia (strain ATCC 27591 / A909 / CDC SS700).